Reading from the N-terminus, the 623-residue chain is Lethal(3)malignant brain tumor-like protein 4 (623 aa).

A disordered region spans residues 1–44; the sequence is MKQPNRKRKLNMDSKERLDQDGRLEQAEEEKKPKDSTTPLSHVP. The span at 10–35 shows a compositional bias: basic and acidic residues; the sequence is LNMDSKERLDQDGRLEQAEEEKKPKD. MBT repeat units lie at residues 52–152, 160–260, and 269–364; these read WSWE…LHIP, FVWM…LIAP, and FSWT…LEVP. The CCHHC-type zinc finger occupies 370–414; it reads LKILPGQAVCPTPGCRGIGHIRGPRYSGHHSAFGCPYSDMNLKKE. Residues cysteine 379, cysteine 384, histidine 398, and cysteine 404 each contribute to the Zn(2+) site. Residues 543–607 enclose the SAM domain; the sequence is WTVDEVAEFV…YNSILMFRHS (65 aa).

The protein resides in the nucleus. Its function is as follows. Putative Polycomb group (PcG) protein. PcG proteins maintain the transcriptionally repressive state of genes, probably via a modification of chromatin, rendering it heritably changed in its expressibility. This chain is Lethal(3)malignant brain tumor-like protein 4 (L3MBTL4), found in Homo sapiens (Human).